The chain runs to 137 residues: Nucleoside diphosphate kinase (137 aa).

The ATP site is built by lysine 9, phenylalanine 58, arginine 86, threonine 92, arginine 103, and asparagine 113. Histidine 121 (pros-phosphohistidine intermediate) is an active-site residue.

The protein belongs to the NDK family. Homotetramer. It depends on Mg(2+) as a cofactor.

Its subcellular location is the cytoplasm. The catalysed reaction is a 2'-deoxyribonucleoside 5'-diphosphate + ATP = a 2'-deoxyribonucleoside 5'-triphosphate + ADP. It carries out the reaction a ribonucleoside 5'-diphosphate + ATP = a ribonucleoside 5'-triphosphate + ADP. Its function is as follows. Major role in the synthesis of nucleoside triphosphates other than ATP. The ATP gamma phosphate is transferred to the NDP beta phosphate via a ping-pong mechanism, using a phosphorylated active-site intermediate. This is Nucleoside diphosphate kinase from Streptococcus pneumoniae (strain P1031).